A 962-amino-acid polypeptide reads, in one-letter code: Protease 3 (962 aa).

The signal sequence occupies residues 1 to 23; the sequence is MPRSTWFKALLLLVALWAPLSQA. His88 contributes to the Zn(2+) binding site. Glu91 serves as the catalytic Proton acceptor. Zn(2+) contacts are provided by His92 and Glu169.

This sequence belongs to the peptidase M16 family. As to quaternary structure, monomer. It depends on Zn(2+) as a cofactor.

It localises to the periplasm. The enzyme catalyses Preferential cleavage of 16-Tyr-|-Leu-17 and 25-Phe-|-Tyr-26 bonds of oxidized insulin B chain. Also acts on other substrates of Mw less than 7 kDa such as insulin and glucagon.. Endopeptidase that degrades small peptides of less than 7 kDa, such as glucagon and insulin. The protein is Protease 3 (ptrA) of Escherichia coli (strain K12).